Here is a 285-residue protein sequence, read N- to C-terminus: 2-dehydro-3-deoxyphosphooctonate aldolase (285 aa).

This sequence belongs to the KdsA family.

Its subcellular location is the cytoplasm. It catalyses the reaction D-arabinose 5-phosphate + phosphoenolpyruvate + H2O = 3-deoxy-alpha-D-manno-2-octulosonate-8-phosphate + phosphate. It participates in carbohydrate biosynthesis; 3-deoxy-D-manno-octulosonate biosynthesis; 3-deoxy-D-manno-octulosonate from D-ribulose 5-phosphate: step 2/3. Its pathway is bacterial outer membrane biogenesis; lipopolysaccharide biosynthesis. In Leptothrix cholodnii (strain ATCC 51168 / LMG 8142 / SP-6) (Leptothrix discophora (strain SP-6)), this protein is 2-dehydro-3-deoxyphosphooctonate aldolase.